A 569-amino-acid chain; its full sequence is RNA demethylase ALKBH10B (569 aa).

Residues 118-151 are a coiled coil; that stretch reads QKVAAKKAEDLKQKKTEEEAEEDLKEVVATEEEE. A disordered region spans residues 164-190; it reads ENDVNGDVEDVEDDSPTSDITDSGSHQ. The span at 167–179 shows a compositional bias: acidic residues; it reads VNGDVEDVEDDSP. Residues 180-189 are compositionally biased toward polar residues; sequence TSDITDSGSH. His366, Glu368, and His421 together coordinate Fe cation. Residue Arg430 coordinates 2-oxoglutarate. Positions 531–545 are enriched in basic residues; sequence KHVKHLPPRAQKKRL. Residues 531–569 are disordered; it reads KHVKHLPPRAQKKRLLPLPPAASSSPAGGSTSEPVITVG. Low complexity predominate over residues 551–560; it reads AASSSPAGGS.

This sequence belongs to the alkB family. Requires Fe(2+) as cofactor.

The enzyme catalyses an N(6)-methyladenosine in mRNA + 2-oxoglutarate + O2 = an adenosine in mRNA + formaldehyde + succinate + CO2. Its function is as follows. Dioxygenase that demethylates RNA by oxidative demethylation: specifically demethylates N(6)-methyladenosine (m6A) RNA, the most prevalent internal modification of messenger RNA (mRNA) in higher eukaryotes. ALKBH10B-mediated mRNA m6A demethylation stabilizes the mRNA of the key flowering time regulators FT, SPL3 and SPL9, which are involved in the control of floral transition. This Arabidopsis thaliana (Mouse-ear cress) protein is RNA demethylase ALKBH10B.